A 93-amino-acid chain; its full sequence is Large ribosomal subunit protein eL43 (93 aa).

The C4-type zinc-finger motif lies at Cys-39 to Cys-60.

Belongs to the eukaryotic ribosomal protein eL43 family.

The chain is Large ribosomal subunit protein eL43 (RPL37A) from Brassica rapa subsp. rapa (Turnip).